The following is a 525-amino-acid chain: MNFILTDFAARLELVARNPEVFKQFGRGVERETLRYSQNGRIATTMHPQGLGSAFTNQWITTDFAESLLEFITPVSHDIDVLLGQLDDIHHFTQTQLGEEKMWPMSMPCYVETEDQITLAQYGSSNSAKMKTLYREGLKRRYGSLMQIISGVHFNFSFPESFWDALHGEQTEDERQATKSEAYFGLIRNYYRFGWLIPYFFGASPAMCSSFLQGRETSLPFEALGKTLYLPKATSLRLSDLGYTNSAQSVLTIGFNSIDEYLEGLTKAIRTPSAEFAKLGVKENGEYRQLNSNVLQIENELYAPIRPKRVAKNGEKPSEALARGGVEYIEVRSLDVNPFTPVGITETQVRFLDLFLTWAALSESQPMDQCELACWRENWNKVVVSGREYGLELQIGCKGEKLSLQAWAHRVFAELRQLAEVMDSAHGDNQYSLACSELEQWIDHPEKTLSAQLLTLIQQNGSLGATGCELGGAYREQNLAHHYRHFSLQQMEQEVALSLIKQSQIEQADEVDFDTYLADYFAYLK.

This sequence belongs to the glutamate--cysteine ligase type 1 family. Type 1 subfamily.

It catalyses the reaction L-cysteine + L-glutamate + ATP = gamma-L-glutamyl-L-cysteine + ADP + phosphate + H(+). The protein operates within sulfur metabolism; glutathione biosynthesis; glutathione from L-cysteine and L-glutamate: step 1/2. This Vibrio vulnificus (strain CMCP6) protein is Glutamate--cysteine ligase.